Reading from the N-terminus, the 257-residue chain is Galactitol 2-dehydrogenase (257 aa).

Residues 21–23 (RAI), 67–68 (DV), N94, Y162, and K166 contribute to the NAD(+) site. Y162 (proton acceptor) is an active-site residue.

The protein belongs to the short-chain dehydrogenases/reductases (SDR) family. In terms of assembly, homotetramer. Mg(2+) serves as cofactor.

It catalyses the reaction galactitol + NAD(+) = keto-D-tagatose + NADH + H(+). Catalyzes the oxidation of galactitol to D-tagatose. Also catalyzes the oxidation of a wide range of substrates, including polyvalent aliphatic alcohols and polyols, to the corresponding ketones and ketoses. Galactitol is the preferred substrate. In Rhizobium johnstonii (strain DSM 114642 / LMG 32736 / 3841) (Rhizobium leguminosarum bv. viciae), this protein is Galactitol 2-dehydrogenase.